The primary structure comprises 207 residues: MKFFSIASLGLLLVVATAFPASELQREDGENSVTRNKPTRASSGKTRRQISYLIKEVFEMRKELCKNDETCIKSHVAVSENNLNLPKMTEKDGCFQTGYNRDDCLVRITSGLLEFQVYLRYIRNKFQEGNNRDRAEHVQSSSKALIEILKQEVKDPNKIVFPSPTANINLLAKLESQNDWQKVMTMQLILSNFEDFLQFTLRAVRKA.

A signal peptide spans 1-18 (MKFFSIASLGLLLVVATA). The segment at 26-47 (REDGENSVTRNKPTRASSGKTR) is disordered. Residues 31–44 (NSVTRNKPTRASSG) are compositionally biased toward polar residues. A disulfide bond links Cys65 and Cys71. Ser74 bears the Phosphoserine mark. Residues Cys94 and Cys104 are joined by a disulfide bond.

Belongs to the IL-6 superfamily. As to quaternary structure, component of a hexamer of two molecules each of IL6, IL6R and IL6ST; first binds to IL6R to associate with the signaling subunit IL6ST. Interacts with IL6R (via the N-terminal ectodomain); this interaction may be affected by IL6R-binding with SORL1, hence decreasing IL6 cis signaling. Interacts with SORL1 (via the N-terminal ectodomain); this interaction leads to IL6 internalization and lysosomal degradation. May form a trimeric complex with the soluble SORL1 ectodomain and soluble IL6R receptor; this interaction might stabilize circulating IL6, hence promoting IL6 trans signaling.

The protein localises to the secreted. Cytokine with a wide variety of biological functions in immunity, tissue regeneration, and metabolism. Binds to IL6R, then the complex associates to the signaling subunit IL6ST/gp130 to trigger the intracellular IL6-signaling pathway. The interaction with the membrane-bound IL6R and IL6ST stimulates 'classic signaling', whereas the binding of IL6 and soluble IL6R to IL6ST stimulates 'trans-signaling'. Alternatively, 'cluster signaling' occurs when membrane-bound IL6:IL6R complexes on transmitter cells activate IL6ST receptors on neighboring receiver cells. Functionally, IL6 is a potent inducer of the acute phase response. Rapid production of IL6 contributes to host defense during infection and tissue injury, but excessive IL6 synthesis is involved in disease pathology. In the innate immune response, is synthesized by myeloid cells, such as macrophages and dendritic cells, upon recognition of pathogens through toll-like receptors (TLRs) at the site of infection or tissue injury. In the adaptive immune response, is required for the differentiation of B cells into immunoglobulin-secreting cells. Plays a major role in the differentiation of CD4(+) T cell subsets. Essential factor for the development of T follicular helper (Tfh) cells that are required for the induction of germinal-center formation. Required to drive naive CD4(+) T cells to the Th17 lineage. Also required for proliferation of myeloma cells and the survival of plasmablast cells. In terms of biological role, acts as an essential factor in bone homeostasis and on vessels directly or indirectly by induction of VEGF, resulting in increased angiogenesis activity and vascular permeability. Induces, through 'trans-signaling' and synergistically with IL1B and TNF, the production of VEGF. Involved in metabolic controls, is discharged into the bloodstream after muscle contraction increasing lipolysis and improving insulin resistance. 'Trans-signaling' in central nervous system also regulates energy and glucose homeostasis. Mediates, through GLP-1, crosstalk between insulin-sensitive tissues, intestinal L cells and pancreatic islets to adapt to changes in insulin demand. Also acts as a myokine. Plays a protective role during liver injury, being required for maintenance of tissue regeneration. Also has a pivotal role in iron metabolism by regulating HAMP/hepcidin expression upon inflammation or bacterial infection. Through activation of IL6ST-YAP-NOTCH pathway, induces inflammation-induced epithelial regeneration. The sequence is that of Interleukin-6 (IL6) from Marmota monax (Woodchuck).